We begin with the raw amino-acid sequence, 482 residues long: 2-succinylbenzoate--CoA ligase (482 aa).

Belongs to the ATP-dependent AMP-binding enzyme family. MenE subfamily.

It carries out the reaction 2-succinylbenzoate + ATP + CoA = 2-succinylbenzoyl-CoA + AMP + diphosphate. Its pathway is quinol/quinone metabolism; 1,4-dihydroxy-2-naphthoate biosynthesis; 1,4-dihydroxy-2-naphthoate from chorismate: step 5/7. The protein operates within quinol/quinone metabolism; menaquinone biosynthesis. In terms of biological role, converts 2-succinylbenzoate (OSB) to 2-succinylbenzoyl-CoA (OSB-CoA). This is 2-succinylbenzoate--CoA ligase from Bacillus anthracis (strain A0248).